We begin with the raw amino-acid sequence, 188 residues long: MADSSIYSTLELPEAPQVQDESRWKLKAVLHRPHLSRFAMVALGLLTVILMSLLMYQRILCCGSKDSTCSHCPSCPILWTRNGSHCYYFSMEKKDWNSSLKFCADKGSHLLTFPDNQGVKLFGEYLGQDFYWIGLRNIDGWRWEGGPALSLRILTNSLIQRCGAIHRNGLQASSCEVALQWICKKVLY.

Residues methionine 1–proline 33 lie on the Cytoplasmic side of the membrane. The short motif at serine 5–leucine 10 is the ITIM motif element. The helical; Signal-anchor for type II membrane protein transmembrane segment at histidine 34–tyrosine 56 threads the bilayer. Residues glutamine 57–tyrosine 188 lie on the Extracellular side of the membrane. Residues cysteine 75 and cysteine 86 are joined by a disulfide bond. Residues asparagine 82 and asparagine 97 are each glycosylated (N-linked (GlcNAc...) asparagine). The C-type lectin domain maps to asparagine 82–lysine 184. Cystine bridges form between cysteine 103–cysteine 183 and cysteine 162–cysteine 175.

Forms a monomer and homodimer; disulfide-linked. Interacts (via ITIM motif) with PTPN11 and INPP5D. In terms of processing, phosphorylated in response to monoclonal antibody G63 binding and antigenic stimulation. As to expression, expressed specifically on natural killer (NK) cells and activated CD8 T-cells. Not detected in spleen, thymus, lymph node, testis, brain or kidney. Not detected on mast cell lines, bone marrow-derived mast cells, or peritoneal mast cells.

It localises to the cell membrane. Its function is as follows. Plays an inhibitory role on natural killer (NK) cells and T-cell functions upon binding to their non-MHC ligands. May mediate missing self recognition by binding to a highly conserved site on classical cadherins, enabling it to monitor expression of E-cadherin/CDH1, N-cadherin/CDH2 and R-cadherin/CDH4 on target cells. In Mus musculus (Mouse), this protein is Killer cell lectin-like receptor subfamily G member 1 (Klrg1).